The following is a 675-amino-acid chain: Polyphosphate kinase (675 aa).

An ATP-binding site is contributed by asparagine 42. Mg(2+)-binding residues include arginine 372 and arginine 401. Histidine 431 acts as the Phosphohistidine intermediate in catalysis. Positions 464, 558, and 586 each coordinate ATP.

This sequence belongs to the polyphosphate kinase 1 (PPK1) family. Mg(2+) is required as a cofactor. In terms of processing, an intermediate of this reaction is the autophosphorylated ppk in which a phosphate is covalently linked to a histidine residue through a N-P bond.

It carries out the reaction [phosphate](n) + ATP = [phosphate](n+1) + ADP. Its function is as follows. Catalyzes the reversible transfer of the terminal phosphate of ATP to form a long-chain polyphosphate (polyP). This Helicobacter pylori (strain J99 / ATCC 700824) (Campylobacter pylori J99) protein is Polyphosphate kinase.